The primary structure comprises 299 residues: ATP phosphoribosyltransferase (299 aa).

The protein belongs to the ATP phosphoribosyltransferase family. Long subfamily. As to quaternary structure, equilibrium between an active dimeric form, an inactive hexameric form and higher aggregates. Interconversion between the various forms is largely reversible and is influenced by the natural substrates and inhibitors of the enzyme. Requires Mg(2+) as cofactor.

The protein localises to the cytoplasm. The catalysed reaction is 1-(5-phospho-beta-D-ribosyl)-ATP + diphosphate = 5-phospho-alpha-D-ribose 1-diphosphate + ATP. It functions in the pathway amino-acid biosynthesis; L-histidine biosynthesis; L-histidine from 5-phospho-alpha-D-ribose 1-diphosphate: step 1/9. Its activity is regulated as follows. Feedback inhibited by histidine. Its function is as follows. Catalyzes the condensation of ATP and 5-phosphoribose 1-diphosphate to form N'-(5'-phosphoribosyl)-ATP (PR-ATP). Has a crucial role in the pathway because the rate of histidine biosynthesis seems to be controlled primarily by regulation of HisG enzymatic activity. The protein is ATP phosphoribosyltransferase of Shigella dysenteriae serotype 1 (strain Sd197).